A 171-amino-acid polypeptide reads, in one-letter code: Actin-related protein 2/3 complex subunit 4 (171 aa).

It belongs to the ARPC4 family. As to quaternary structure, component of the Arp2/3 complex composed of ARP2, ARP3, ARC40/p41-ARC, ARC35/p34-ARC, ARC18/p21-ARC, ARC19/p20-ARC and ARC16/p16-ARC.

The protein localises to the cytoplasm. It is found in the cytoskeleton. Its subcellular location is the actin patch. In terms of biological role, functions as actin-binding component of the Arp2/3 complex which is involved in regulation of actin polymerization and together with an activating nucleation-promoting factor (NPF) mediates the formation of branched actin networks. Seems to contact the mother actin filament. This is Actin-related protein 2/3 complex subunit 4 (ARC19) from Saccharomyces cerevisiae (strain ATCC 204508 / S288c) (Baker's yeast).